Reading from the N-terminus, the 576-residue chain is Threonine dehydratase, mitochondrial (576 aa).

K109 is modified (N6-(pyridoxal phosphate)lysine). 2 consecutive ACT-like domains span residues 393–473 and 495–566; these read VFML…DISD and RIIS…DETD.

The protein belongs to the serine/threonine dehydratase family. In terms of assembly, homotetramer. Pyridoxal 5'-phosphate is required as a cofactor.

It is found in the mitochondrion. The enzyme catalyses L-threonine = 2-oxobutanoate + NH4(+). The protein operates within amino-acid biosynthesis; L-isoleucine biosynthesis; 2-oxobutanoate from L-threonine: step 1/1. Isoleucine allosterically inhibits while valine allosterically activates this enzyme. The sequence is that of Threonine dehydratase, mitochondrial (ILV1) from Saccharomyces cerevisiae (strain ATCC 204508 / S288c) (Baker's yeast).